We begin with the raw amino-acid sequence, 84 residues long: Beta/gamma-crystallin (84 aa).

Beta/gamma crystallin 'Greek key' domains follow at residues 2-42 and 43-84; these read GKII…IVES and GTWF…VKQQ. Residues 64-84 are disordered; sequence KYPNPGSWGGNDDELSSVKQQ.

The protein belongs to the beta/gamma-crystallin family. Monomer. As to expression, palps of larvae and otolith of the light-sensing ocellus.

In terms of biological role, structural component of the neuroectodermal visual system. This Ciona intestinalis (Transparent sea squirt) protein is Beta/gamma-crystallin.